Reading from the N-terminus, the 624-residue chain is Coagulation factor XI (624 aa).

An N-terminal signal peptide occupies residues 1 to 18 (MTSLHQVLYFIFFASVSS). Apple domains lie at 20–103 (CVTK…FKQC), 110–193 (CSKD…LKSC), 200–283 (CIRD…LQHC), and 291–376 (CHPS…LRLC). Disulfide bonds link C20–C103, C46–C76, C50–C56, C110–C193, C136–C165, C140–C146, C200–C283, C226–C255, C230–C236, C291–C376, C317–C348, C321–C327, C382–C499, C415–C431, C513–C580, C544–C559, and C570–C598. N-linked (GlcNAc...) asparagine glycans are attached at residues N90 and N126. A glycan (N-linked (GlcNAc...) asparagine) is linked at N297. One can recognise a Peptidase S1 domain in the interval 390–622 (VVGGAASVHG…YVDWILEKTQ (233 aa)). Residue H430 is the Charge relay system of the active site. Residue N449 is glycosylated (N-linked (GlcNAc...) asparagine). The Charge relay system role is filled by D479. N490 is a glycosylation site (N-linked (GlcNAc...) asparagine). 547–550 (RYRR) serves as a coordination point for heparin. Residue S574 is the Charge relay system of the active site.

It belongs to the peptidase S1 family. Plasma kallikrein subfamily. In terms of assembly, homodimer; disulfide-linked. After activation the heavy and light chains are also linked by a disulfide bond. Interacts (activated) with F9 (inactive and activated) in calcium-dependent manner. Forms a heterodimer with SERPINA5. Post-translationally, activated by factor XIIa (or XII), which cleaves each polypeptide after Arg-389 into the light chain, which contains the active site, and the heavy chain, which associates with high molecular weight (HMW) kininogen. Activated by F12 (activated); the presence of negatively charged surfaces accelerates activation. Activated by F2 (thrombin); the presence of negatively charged surfaces, such as polyphosphate and dextran sulfate, strongly accelerates activation. Autoactivated; the presence of negatively charged surfaces, such as polyphosphate and dextran sulfate, accelerates autoactivation and autolysis. In terms of processing, N-glycosylated on both chains. N-glycosylated sites mainly consist of nonfucosylated sialylated biantennary (in high abundance) and/or triantennary (in low abundance) complex structures.

The protein resides in the secreted. It carries out the reaction Selective cleavage of Arg-|-Ala and Arg-|-Val bonds in factor IX to form factor IXa.. Its activity is regulated as follows. Inhibited by SERPINA5. Factor XI triggers the middle phase of the intrinsic pathway of blood coagulation by activating factor IX. This chain is Coagulation factor XI (F11), found in Mus musculus (Mouse).